We begin with the raw amino-acid sequence, 66 residues long: Large ribosomal subunit protein bL31 (66 aa).

Residues cysteine 16, cysteine 18, cysteine 36, and cysteine 39 each coordinate Zn(2+).

Belongs to the bacterial ribosomal protein bL31 family. Type A subfamily. As to quaternary structure, part of the 50S ribosomal subunit. The cofactor is Zn(2+).

Binds the 23S rRNA. This chain is Large ribosomal subunit protein bL31, found in Nautilia profundicola (strain ATCC BAA-1463 / DSM 18972 / AmH).